A 156-amino-acid chain; its full sequence is Probable histone H2A.6 (156 aa).

2 disordered regions span residues 1 to 26 and 129 to 156; these read MDVG…KKPV and KKTA…QARS. Positions 9–26 are enriched in basic residues; that stretch reads AAKKAVGRKLGGPKKKPV. Residues 130–147 show a composition bias toward basic and acidic residues; the sequence is KTAEKADKPAKASKDKAA. The short motif at 149-152 is the SPKK motif element; sequence SPKK.

It belongs to the histone H2A family. In terms of assembly, the nucleosome is a histone octamer containing two molecules each of H2A, H2B, H3 and H4 assembled in one H3-H4 heterotetramer and two H2A-H2B heterodimers. The octamer wraps approximately 147 bp of DNA.

Its subcellular location is the nucleus. It is found in the chromosome. Its function is as follows. Core component of nucleosome. Nucleosomes wrap and compact DNA into chromatin, limiting DNA accessibility to the cellular machineries which require DNA as a template. Histones thereby play a central role in transcription regulation, DNA repair, DNA replication and chromosomal stability. DNA accessibility is regulated via a complex set of post-translational modifications of histones, also called histone code, and nucleosome remodeling. The chain is Probable histone H2A.6 from Oryza sativa subsp. indica (Rice).